Reading from the N-terminus, the 271-residue chain is Putative phosphoenolpyruvate synthase regulatory protein (271 aa).

151-158 (GVSRSGKT) provides a ligand contact to ADP.

It belongs to the pyruvate, phosphate/water dikinase regulatory protein family. PSRP subfamily.

The enzyme catalyses [pyruvate, water dikinase] + ADP = [pyruvate, water dikinase]-phosphate + AMP + H(+). The catalysed reaction is [pyruvate, water dikinase]-phosphate + phosphate + H(+) = [pyruvate, water dikinase] + diphosphate. In terms of biological role, bifunctional serine/threonine kinase and phosphorylase involved in the regulation of the phosphoenolpyruvate synthase (PEPS) by catalyzing its phosphorylation/dephosphorylation. This is Putative phosphoenolpyruvate synthase regulatory protein from Burkholderia ambifaria (strain MC40-6).